We begin with the raw amino-acid sequence, 363 residues long: NAD(P)H-quinone oxidoreductase subunit 1, chloroplastic (363 aa).

Transmembrane regions (helical) follow at residues W28 to V48, F98 to F118, I129 to G149, F253 to V273, L274 to I294, I300 to I320, and L336 to T356.

The protein belongs to the complex I subunit 1 family. As to quaternary structure, NDH is composed of at least 16 different subunits, 5 of which are encoded in the nucleus.

The protein localises to the plastid. Its subcellular location is the chloroplast thylakoid membrane. The enzyme catalyses a plastoquinone + NADH + (n+1) H(+)(in) = a plastoquinol + NAD(+) + n H(+)(out). It carries out the reaction a plastoquinone + NADPH + (n+1) H(+)(in) = a plastoquinol + NADP(+) + n H(+)(out). In terms of biological role, NDH shuttles electrons from NAD(P)H:plastoquinone, via FMN and iron-sulfur (Fe-S) centers, to quinones in the photosynthetic chain and possibly in a chloroplast respiratory chain. The immediate electron acceptor for the enzyme in this species is believed to be plastoquinone. Couples the redox reaction to proton translocation, and thus conserves the redox energy in a proton gradient. The polypeptide is NAD(P)H-quinone oxidoreductase subunit 1, chloroplastic (Citrus sinensis (Sweet orange)).